The chain runs to 201 residues: MAERRVPFSLLRGPSWDPFRDWYPAHSRLFDQAFGLPRLPEEWSQWLSHSGWPGYVRALPAAAIEGPAYNRALSRQLSSGVSEIQQTADRWRVSLDVNHFAPEELTVKTKDGVVEITGKHEERQDEHGYISRCFTRKYTLPPGVDPTLVSSSLSPEGTLTVEAPLPKSATQSAEITIPVTFQARAQLGGPEAGKSEQPENK.

At Arg-12 the chain carries Omega-N-methylarginine. Ser-15 is subject to Phosphoserine; by MAPKAPK2 and MAPKAPK3. Ser-27 carries the phosphoserine modification. The interval 68 to 201 is interaction with TGFB1I1; the sequence is AYNRALSRQL…AGKSEQPENK (134 aa). A sHSP domain is found at 72-180; that stretch reads ALSRQLSSGV…QSAEITIPVT (109 aa). Residues Ser-74 and Ser-78 each carry the phosphoserine; by MAPKAPK2, MAPKAPK3 and MAPKAPK5 modification. Phosphoserine is present on residues Ser-79, Ser-82, and Ser-94. Residue Lys-119 is modified to N6-acetyllysine. Phosphothreonine is present on Thr-170. 2 positions are modified to phosphoserine: Ser-172 and Ser-195.

The protein belongs to the small heat shock protein (HSP20) family. As to quaternary structure, homooligomer. Homodimer; becomes monomeric upon activation. Heterooligomer; with HSPB6. Associates with alpha- and beta-tubulin. Interacts with TGFB1I1. Interacts with CRYAB. Interacts with HSPB8. Interacts with HSPBAP1. Post-translationally, phosphorylated upon exposure to protein kinase C activators and heat shock. Phosphorylation by MAPKAPK2 and MAPKAPK3 in response to stress dissociates HSPB1 from large small heat-shock protein (sHsps) oligomers and impairs its chaperone activity and ability to protect against oxidative stress effectively. Phosphorylation by MAPKAPK5 in response to PKA stimulation induces F-actin rearrangement.

The protein localises to the cytoplasm. It localises to the nucleus. Its subcellular location is the cytoskeleton. The protein resides in the spindle. Its function is as follows. Small heat shock protein which functions as a molecular chaperone probably maintaining denatured proteins in a folding-competent state. Plays a role in stress resistance and actin organization. Through its molecular chaperone activity may regulate numerous biological processes including the phosphorylation and the axonal transport of neurofilament proteins. This Bos taurus (Bovine) protein is Heat shock protein beta-1 (HSPB1).